A 334-amino-acid chain; its full sequence is Beta-hexosaminidase (334 aa).

Residues D57, R65, R128, and K158–H159 contribute to the substrate site. H171 functions as the Proton donor/acceptor in the catalytic mechanism. The active-site Nucleophile is D242.

The protein belongs to the glycosyl hydrolase 3 family. NagZ subfamily.

The protein resides in the cytoplasm. The catalysed reaction is Hydrolysis of terminal non-reducing N-acetyl-D-hexosamine residues in N-acetyl-beta-D-hexosaminides.. Its pathway is cell wall biogenesis; peptidoglycan recycling. Plays a role in peptidoglycan recycling by cleaving the terminal beta-1,4-linked N-acetylglucosamine (GlcNAc) from peptide-linked peptidoglycan fragments, giving rise to free GlcNAc, anhydro-N-acetylmuramic acid and anhydro-N-acetylmuramic acid-linked peptides. The sequence is that of Beta-hexosaminidase from Methylococcus capsulatus (strain ATCC 33009 / NCIMB 11132 / Bath).